The sequence spans 285 residues: Pantothenate synthetase (285 aa).

30–37 (MGNLHAGH) provides a ligand contact to ATP. The active-site Proton donor is H37. Q61 provides a ligand contact to (R)-pantoate. Q61 contacts beta-alanine. Residue 149-152 (GEKD) participates in ATP binding. (R)-pantoate is bound at residue Q155. 186-189 (LSSR) contacts ATP.

Belongs to the pantothenate synthetase family. In terms of assembly, homodimer.

The protein resides in the cytoplasm. The catalysed reaction is (R)-pantoate + beta-alanine + ATP = (R)-pantothenate + AMP + diphosphate + H(+). Its pathway is cofactor biosynthesis; (R)-pantothenate biosynthesis; (R)-pantothenate from (R)-pantoate and beta-alanine: step 1/1. Functionally, catalyzes the condensation of pantoate with beta-alanine in an ATP-dependent reaction via a pantoyl-adenylate intermediate. The protein is Pantothenate synthetase of Ectopseudomonas mendocina (strain ymp) (Pseudomonas mendocina).